The following is a 91-amino-acid chain: Long neurotoxin OH-56 (91 aa).

The N-terminal stretch at 1 to 21 (MKTLLLTLVVVTIMCLDLGYT) is a signal peptide. Intrachain disulfides connect Cys-24–Cys-42, Cys-35–Cys-63, Cys-48–Cys-52, Cys-67–Cys-78, and Cys-79–Cys-84.

Belongs to the three-finger toxin family. Long-chain subfamily. Type II alpha-neurotoxin sub-subfamily. Expressed by the venom gland.

The protein localises to the secreted. Binds with high affinity to muscular (alpha-1/CHRNA1) and neuronal (alpha-7/CHRNA7) nicotinic acetylcholine receptor (nAChR) and inhibits acetylcholine from binding to the receptor, thereby impairing neuromuscular and neuronal transmission. In Ophiophagus hannah (King cobra), this protein is Long neurotoxin OH-56.